Consider the following 74-residue polypeptide: Defensin-like protein P322 (74 aa).

The N-terminal stretch at 1–19 (MRFFATFFLLAMLVVATKM) is a signal peptide. 4 disulfides stabilise this stretch: Cys-30-Cys-74, Cys-41-Cys-61, Cys-47-Cys-68, and Cys-51-Cys-70.

This sequence belongs to the DEFL family. Protease inhibitor I18 (RTI/MTI-2) subfamily. Tuber.

The protein resides in the secreted. This is Defensin-like protein P322 from Solanum tuberosum (Potato).